A 440-amino-acid chain; its full sequence is GTPase Der (440 aa).

2 EngA-type G domains span residues 3–167 (PIIA…PYDR) and 176–351 (TRIA…EQYC). Residues 9–16 (GRPNVGKS), 56–60 (DTGGF), 119–122 (NKVD), 182–189 (GRPNVGKS), 229–233 (DTAGI), and 294–297 (NKWD) each bind GTP. Residues 352 to 436 (KRVTTGELNR…PLKLIFRGRD (85 aa)) enclose the KH-like domain.

This sequence belongs to the TRAFAC class TrmE-Era-EngA-EngB-Septin-like GTPase superfamily. EngA (Der) GTPase family. In terms of assembly, associates with the 50S ribosomal subunit.

In terms of biological role, GTPase that plays an essential role in the late steps of ribosome biogenesis. This chain is GTPase Der, found in Citrifermentans bemidjiense (strain ATCC BAA-1014 / DSM 16622 / JCM 12645 / Bem) (Geobacter bemidjiensis).